Here is a 43-residue protein sequence, read N- to C-terminus: Potassium channel toxin gamma-KTx 4.9 (43 aa).

Intrachain disulfides connect C5–C23, C11–C34, C20–C39, and C24–C41.

It belongs to the ergtoxin family. Gamma-KTx 4 subfamily. In terms of tissue distribution, expressed by the venom gland.

It is found in the secreted. Its function is as follows. Reversibly blocks Kv11/ERG potassium channels. The polypeptide is Potassium channel toxin gamma-KTx 4.9 (Centruroides sculpturatus (Arizona bark scorpion)).